Consider the following 167-residue polypeptide: Endothelin-3 (167 aa).

A signal peptide spans 1-19 (MELGLWLLLGLTVTSAAAA). A propeptide spanning residues 20–50 (LPAQPGNAGQERGPGRSGDQEEKRVPAHHRP) is cleaved from the precursor. The segment at 22-45 (AQPGNAGQERGPGRSGDQEEKRVP) is disordered. Disulfide bonds link Cys-53-Cys-67 and Cys-55-Cys-63. Positions 74–167 (INTPEQTVPY…KSRTDKVHQP (94 aa)) are excised as a propeptide. A disordered region spans residues 85-112 (LSNHRGSLRGKRSSGPVPESSQSSPQTR). The span at 97–109 (SSGPVPESSQSSP) shows a compositional bias: low complexity. The tract at residues 115 to 135 (CACSGVDDKACAYFCAHVTSY) is endothelin-like. Residues 140–149 (EKAAAEEKQE) show a composition bias toward basic and acidic residues. A disordered region spans residues 140–167 (EKAAAEEKQETGGPRQRLKSRTDKVHQP).

Belongs to the endothelin/sarafotoxin family.

The protein resides in the secreted. Functionally, endothelins are endothelium-derived vasoconstrictor peptides. This chain is Endothelin-3 (Edn3), found in Rattus norvegicus (Rat).